A 365-amino-acid chain; its full sequence is 3-dehydroquinate synthase (365 aa).

Residues 75–80 (DAESGK), 109–113 (GAATD), 133–134 (TT), Lys-146, and Lys-155 each bind NAD(+). Positions 188, 253, and 269 each coordinate Zn(2+).

The protein belongs to the sugar phosphate cyclases superfamily. Dehydroquinate synthase family. It depends on NAD(+) as a cofactor. The cofactor is Co(2+). Zn(2+) is required as a cofactor.

It localises to the cytoplasm. The enzyme catalyses 7-phospho-2-dehydro-3-deoxy-D-arabino-heptonate = 3-dehydroquinate + phosphate. It participates in metabolic intermediate biosynthesis; chorismate biosynthesis; chorismate from D-erythrose 4-phosphate and phosphoenolpyruvate: step 2/7. In terms of biological role, catalyzes the conversion of 3-deoxy-D-arabino-heptulosonate 7-phosphate (DAHP) to dehydroquinate (DHQ). This Corynebacterium efficiens (strain DSM 44549 / YS-314 / AJ 12310 / JCM 11189 / NBRC 100395) protein is 3-dehydroquinate synthase.